Here is a 682-residue protein sequence, read N- to C-terminus: Zinc finger protein 16 (682 aa).

The segment covering 1–10 has biased composition (basic and acidic residues); it reads MPSLRTRREE. The interval 1–43 is disordered; the sequence is MPSLRTRREEAEMELSVPGPSPWTPAAQARVRDAPAVTHPGSA. The segment at 62–210 is necessary for transcription activation; it reads YQQPDCDTRT…GVPTAESPLI (149 aa). The C2H2-type 1; degenerate zinc-finger motif lies at 209-231; the sequence is LICNECGKTFQGNPDLIQRQIVH. Residues 237–259 form a C2H2-type 2; degenerate zinc finger; sequence FMCDDCGKTFSQNSVLKNRHRSH. Residue Lys253 forms a Glycyl lysine isopeptide (Lys-Gly) (interchain with G-Cter in SUMO2) linkage. 8 C2H2-type zinc fingers span residues 265–287, 293–315, 321–343, 349–371, 377–399, 405–427, 433–455, and 461–483; these read YQCSECGKAFRGHSDFSRHQSHH, YMCNECGKAFSQNSSLKKHQKSH, YECNECGKAFRRSSNLIQHQRIH, YVCSECGKAFRRSSNLIKHHRTH, FECGECGKAFSQSAHLRKHQRVH, YECNDCGKPFSRVSNLIKHHRVH, YKCSDCGKAFSQSSSLIQHRRIH, and HVCNVCGKAFSYSSVLRKHQIIH. Required for nuclear localization stretches follow at residues 268–393 and 341–373; these read SECG…AHLR and RIHSGEKPYVCSECGKAFRRSSNLIKHHRTHTG. A required for nuclear localization region spans residues 473-503; sequence SSVLRKHQIIHTGEKPYRCSVCGKAFSHSSA. Lys487 bears the N6-acetyllysine mark. 7 C2H2-type zinc fingers span residues 489 to 511, 517 to 539, 545 to 567, 573 to 595, 601 to 623, 629 to 651, and 657 to 679; these read YRCSVCGKAFSHSSALIQHQGVH, YACHECGKTFGRSSNLILHQRVH, YECTECGKTFSQSSTLIQHQRIH, HECNQCGKAFNRSSNLIHHQKVH, YTCVECGKGFSQSSHLIQHQIIH, YKCSECGKAFSQRSVLIQHQRIH, and YDCAACGKAFSQRSKLIKHQLIH.

Belongs to the krueppel C2H2-type zinc-finger protein family. As to quaternary structure, interacts with INCA1; the interaction inhibits INCA1 activity and induces the cell cycle process. Ubiquitous.

The protein localises to the nucleus. Acts as a transcriptional activator. Promotes cell proliferation by facilitating the cell cycle phase transition from the S to G2/M phase. Involved in both the hemin- and phorbol myristate acetate (PMA)-induced erythroid and megakaryocytic differentiation, respectively. Also plays a role as an inhibitor of cell apoptosis. The protein is Zinc finger protein 16 (ZNF16) of Homo sapiens (Human).